Here is a 365-residue protein sequence, read N- to C-terminus: DNA replication and repair protein RecF (365 aa).

30-37 (GRNAQGKT) serves as a coordination point for ATP.

It belongs to the RecF family.

The protein resides in the cytoplasm. Its function is as follows. The RecF protein is involved in DNA metabolism; it is required for DNA replication and normal SOS inducibility. RecF binds preferentially to single-stranded, linear DNA. It also seems to bind ATP. The sequence is that of DNA replication and repair protein RecF from Streptococcus pneumoniae serotype 2 (strain D39 / NCTC 7466).